Here is a 252-residue protein sequence, read N- to C-terminus: UPF0273 protein MK0039 (252 aa).

The KaiC domain maps to 4–248; it reads ERVSTGIPGM…VFVKERGEVR (245 aa). Residue 31-38 participates in ATP binding; that stretch reads GGPGTGKT.

This sequence belongs to the UPF0273 family.

This Methanopyrus kandleri (strain AV19 / DSM 6324 / JCM 9639 / NBRC 100938) protein is UPF0273 protein MK0039.